Here is a 261-residue protein sequence, read N- to C-terminus: MASSKERENFVYVAKLAEQAERYDEMVEAMKNVANMDVELTVEERNLLSVGYKNVVGSRRASWRILSSIEQKEESRGNEQNVKRIKEYLQKVESELTNICNDIMVVIDQHLIPSCSAGESTVFYHKMKGDYYRYLAEFKAGNDKKEVAELSLKAYQAATTAAEAELAPTHPIRLGLALNFSVFYYEIMNSPERACHLAKQAFDEAISELDSLNEDSYKDSTLIMQLLRDNLTLWTSDLPEDAEDAQKGDATNKAGGGEDAE.

A disordered region spans residues 239 to 261 (PEDAEDAQKGDATNKAGGGEDAE).

This sequence belongs to the 14-3-3 family. In terms of assembly, homodimer.

The polypeptide is 14-3-3 protein 9 (TFT9) (Solanum lycopersicum (Tomato)).